Here is a 208-residue protein sequence, read N- to C-terminus: F-box/kelch-repeat protein At2g43270 (208 aa).

An F-box domain is found at 1–44 (MIYVVPDLLEEIFLGLPLKSILRFKTVSKQWRSILESKSFAERR). The Kelch repeat unit spans residues 149–200 (RDKFNGSYKVVRMCFSPVEKCEVLDVETGEWSELNPPPNDIDVGRKSVCVNG).

The protein is F-box/kelch-repeat protein At2g43270 of Arabidopsis thaliana (Mouse-ear cress).